A 1538-amino-acid chain; its full sequence is Myosin-9 (1538 aa).

The Myosin N-terminal SH3-like domain occupies 16–65 (SIGSHVWFEDPEVAWIDGEVEKINGQEVVIQATTGKKVTAKLSKIYPKDV). The 671-residue stretch at 70–740 (GGVDDMTKLS…QMAELDARRA (671 aa)) folds into the Myosin motor domain. ATP-binding positions include 164–171 (GESGAGKT) and 217–225 (NNNSSRFGK). 4 actin-binding regions span residues 503-537 (LIEK…YQTF), 539-562 (THKR…AGEV), 597-621 (FPPL…KLQL), and 621-643 (LQQL…KPNN). IQ domains lie at 743-772 (LSSA…ATIS), 766-795 (LRKA…EAAA), 791-820 (REAA…ASLV), 814-843 (LHVA…TKAA), 839-868 (QTKA…GVVL), and 862-891 (LKNG…AARE). Positions 892-1064 (TGALKEAKDM…VLRQQAVSMA (173 aa)) form a coiled coil. Residues 1017-1032 (SLEDKKKKLEETEKKG) show a composition bias toward basic and acidic residues. Disordered regions lie at residues 1017-1041 (SLED…SLTR) and 1098-1121 (SHSI…NEKQ). The 314-residue stretch at 1168–1481 (DRIIQTIGHA…IANMRVLMTE (314 aa)) folds into the Dilute domain.

It belongs to the TRAFAC class myosin-kinesin ATPase superfamily. Myosin family. Plant myosin class XI subfamily. In terms of assembly, homodimer.

Myosin heavy chain that is required for the cell cycle-regulated transport of various organelles and proteins for their segregation. Functions by binding with its tail domain to receptor proteins on organelles and exerting force with its N-terminal motor domain against actin filaments, thereby transporting its cargo along polarized actin cables. Involved in trafficking of Golgi stacks and mitochondria. The polypeptide is Myosin-9 (XI-C) (Arabidopsis thaliana (Mouse-ear cress)).